The following is a 213-amino-acid chain: Probable nicotinate-nucleotide adenylyltransferase (213 aa).

This sequence belongs to the NadD family.

It carries out the reaction nicotinate beta-D-ribonucleotide + ATP + H(+) = deamido-NAD(+) + diphosphate. It participates in cofactor biosynthesis; NAD(+) biosynthesis; deamido-NAD(+) from nicotinate D-ribonucleotide: step 1/1. In terms of biological role, catalyzes the reversible adenylation of nicotinate mononucleotide (NaMN) to nicotinic acid adenine dinucleotide (NaAD). This chain is Probable nicotinate-nucleotide adenylyltransferase, found in Salmonella gallinarum (strain 287/91 / NCTC 13346).